A 270-amino-acid polypeptide reads, in one-letter code: Bifunctional folate synthesis protein (270 aa).

Residues 1 to 119 (MDQLQIKDLE…TCSVTIHRRK (119 aa)) form a DHNA region. Substrate-binding positions include E21, Y53, and 72–73 (IE). K99 functions as the Proton donor/acceptor; for DHNA activity in the catalytic mechanism. An HPPK region spans residues 120-270 (QRAFIALGSN…IRNLYDALKK (151 aa)). ATP is bound by residues 160–163 (TEPW), 171–173 (FAN), 192–195 (LAIE), 200–215 (RVRE…DLDL), 227–233 (DLILPHP), and 238–240 (RLF). Mg(2+) contacts are provided by D212 and D214.

It in the N-terminal section; belongs to the DHNA family. In the C-terminal section; belongs to the HPPK family. As to quaternary structure, homotrimer or homotetramer.

It catalyses the reaction 7,8-dihydroneopterin = 6-hydroxymethyl-7,8-dihydropterin + glycolaldehyde. The catalysed reaction is 6-hydroxymethyl-7,8-dihydropterin + ATP = (7,8-dihydropterin-6-yl)methyl diphosphate + AMP + H(+). It participates in cofactor biosynthesis; tetrahydrofolate biosynthesis; 2-amino-4-hydroxy-6-hydroxymethyl-7,8-dihydropteridine diphosphate from 7,8-dihydroneopterin triphosphate: step 3/4. It functions in the pathway cofactor biosynthesis; tetrahydrofolate biosynthesis; 2-amino-4-hydroxy-6-hydroxymethyl-7,8-dihydropteridine diphosphate from 7,8-dihydroneopterin triphosphate: step 4/4. In terms of biological role, catalyzes two sequential steps of tetrahydrofolate biosynthesis, the conversion of 7,8-dihydroneopterin to 6-hydroxymethyl-7,8-dihydropterin diphosphate. The polypeptide is Bifunctional folate synthesis protein (Streptococcus pneumoniae serotype 4 (strain ATCC BAA-334 / TIGR4)).